A 390-amino-acid chain; its full sequence is GTPase Obg (390 aa).

Residues Met1–Leu159 form the Obg domain. In terms of domain architecture, OBG-type G spans Ala160–Asn333. Residues Gly166–Ser173, Phe191–Ile195, Asp213–Gly216, Asn283–Asp286, and Ser314–Ala316 each bind GTP. The Mg(2+) site is built by Ser173 and Thr193. Over residues Glu363–Val384 the composition is skewed to acidic residues. The interval Glu363–Arg390 is disordered.

It belongs to the TRAFAC class OBG-HflX-like GTPase superfamily. OBG GTPase family. As to quaternary structure, monomer. It depends on Mg(2+) as a cofactor.

It is found in the cytoplasm. Functionally, an essential GTPase which binds GTP, GDP and possibly (p)ppGpp with moderate affinity, with high nucleotide exchange rates and a fairly low GTP hydrolysis rate. Plays a role in control of the cell cycle, stress response, ribosome biogenesis and in those bacteria that undergo differentiation, in morphogenesis control. This is GTPase Obg from Yersinia enterocolitica serotype O:8 / biotype 1B (strain NCTC 13174 / 8081).